The chain runs to 208 residues: Transmembrane protein 160 (208 aa).

Residues Met1–Arg45 constitute a mitochondrion transit peptide. 3 helical membrane passes run Gly82–Val102, Ala110–Val130, and Val147–Leu167. Residues Asp181–Glu192 are compositionally biased toward acidic residues. A disordered region spans residues Asp181 to Lys208. Residues Ala194 to Lys208 show a composition bias toward basic and acidic residues.

Belongs to the TMEM160 family.

The protein localises to the mitochondrion inner membrane. This Danio rerio (Zebrafish) protein is Transmembrane protein 160.